The primary structure comprises 770 residues: Low-density lipoprotein receptor-related protein 3 (770 aa).

Residues 1 to 36 (MEKRAAAGPEGAPGARAPLAVVCLVNLFLTGRLSSA) form the signal peptide. Residues 37-496 (VPALAACSGK…HGCLAAVPRK (460 aa)) lie on the Extracellular side of the membrane. 9 disulfides stabilise this stretch: Cys-43-Cys-72, Cys-99-Cys-120, Cys-166-Cys-178, Cys-173-Cys-191, Cys-185-Cys-200, Cys-212-Cys-227, Cys-219-Cys-240, Cys-234-Cys-249, and Cys-254-Cys-282. In terms of domain architecture, CUB 1 spans 43-159 (CSGKLEQHTE…QGFRLSYIRG (117 aa)). Residue Asn-71 is glycosylated (N-linked (GlcNAc...) asparagine). 2 LDL-receptor class A domains span residues 165 to 201 (SCQT…GNCS) and 211 to 250 (LCPG…AGCP). A glycan (N-linked (GlcNAc...) asparagine) is linked at Asn-199. Positions 254 to 365 (CGRRLGSFYG…HGFNATYQVK (112 aa)) constitute a CUB 2 domain. N-linked (GlcNAc...) asparagine glycosylation occurs at Asn-359. 2 LDL-receptor class A domains span residues 415 to 453 (ACPP…KNCF) and 454 to 490 (SCQP…HGCL). 6 disulfides stabilise this stretch: Cys-416/Cys-430, Cys-423/Cys-443, Cys-437/Cys-452, Cys-455/Cys-467, Cys-462/Cys-480, and Cys-474/Cys-489. The helical transmembrane segment at 497 to 517 (VITAALIGSLVCGLLLVIALG) threads the bilayer. Over 518 to 770 (CAFKLYSLRT…ASDDEALLVC (253 aa)) the chain is Cytoplasmic. Residues 639-753 (LLQAAPGPVP…PLGVCRSPPP (115 aa)) form a disordered region. Over residues 689–703 (RDPEYRPEDKERKAC) the composition is skewed to basic and acidic residues.

This sequence belongs to the LDLR family. Binds GGA1 and GGA2.

The protein localises to the membrane. The protein resides in the coated pit. In terms of biological role, probable receptor, which may be involved in the internalization of lipophilic molecules and/or signal transduction. Its precise role is however unclear, since it does not bind to very low density lipoprotein (VLDL) or to LRPAP1 in vitro. The chain is Low-density lipoprotein receptor-related protein 3 (Lrp3) from Rattus norvegicus (Rat).